The chain runs to 41 residues: Large ribosomal subunit protein bL36 (41 aa).

The protein belongs to the bacterial ribosomal protein bL36 family.

This chain is Large ribosomal subunit protein bL36, found in Zymomonas mobilis subsp. mobilis (strain ATCC 31821 / ZM4 / CP4).